A 112-amino-acid chain; its full sequence is UPF0329 protein ECU11_0080 (112 aa).

This sequence belongs to the UPF0329 family.

This chain is UPF0329 protein ECU11_0080, found in Encephalitozoon cuniculi (strain GB-M1) (Microsporidian parasite).